A 474-amino-acid chain; its full sequence is tRNA-2-methylthio-N(6)-dimethylallyladenosine synthase (474 aa).

Residues 3–120 (KKLHIKTWGC…LPEMINSVRG (118 aa)) form the MTTase N-terminal domain. Positions 12, 49, 83, 157, 161, and 164 each coordinate [4Fe-4S] cluster. The Radical SAM core domain maps to 143–375 (RAEGPTAFVS…QERINQQAMA (233 aa)). Residues 378 to 441 (RRMLGTVQRI…TNSLRGKVVR (64 aa)) enclose the TRAM domain.

It belongs to the methylthiotransferase family. MiaB subfamily. As to quaternary structure, monomer. The cofactor is [4Fe-4S] cluster.

It localises to the cytoplasm. The catalysed reaction is N(6)-dimethylallyladenosine(37) in tRNA + (sulfur carrier)-SH + AH2 + 2 S-adenosyl-L-methionine = 2-methylsulfanyl-N(6)-dimethylallyladenosine(37) in tRNA + (sulfur carrier)-H + 5'-deoxyadenosine + L-methionine + A + S-adenosyl-L-homocysteine + 2 H(+). Catalyzes the methylthiolation of N6-(dimethylallyl)adenosine (i(6)A), leading to the formation of 2-methylthio-N6-(dimethylallyl)adenosine (ms(2)i(6)A) at position 37 in tRNAs that read codons beginning with uridine. The protein is tRNA-2-methylthio-N(6)-dimethylallyladenosine synthase of Citrobacter koseri (strain ATCC BAA-895 / CDC 4225-83 / SGSC4696).